Here is an 82-residue protein sequence, read N- to C-terminus: Small ribosomal subunit protein bS16 (82 aa).

This sequence belongs to the bacterial ribosomal protein bS16 family.

This is Small ribosomal subunit protein bS16 from Vibrio cholerae serotype O1 (strain ATCC 39541 / Classical Ogawa 395 / O395).